Reading from the N-terminus, the 1299-residue chain is Outer capsid protein VP1 (1299 aa).

Belongs to the aquareoviridae outer capsid VP1 protein family.

The protein localises to the virion. The enzyme catalyses a 5'-end diphospho-ribonucleoside in mRNA + GTP + H(+) = a 5'-end (5'-triphosphoguanosine)-ribonucleoside in mRNA + diphosphate. It carries out the reaction a 5'-end (5'-triphosphoguanosine)-ribonucleoside in mRNA + S-adenosyl-L-methionine = a 5'-end (N(7)-methyl 5'-triphosphoguanosine)-ribonucleoside in mRNA + S-adenosyl-L-homocysteine. In terms of biological role, outer capsid protein involved in mRNA capping. Catalyzes the last 3 enzymatic activities for formation of the 5' cap structure on the viral plus-strand transcripts, namely the RNA guanylyltransferase, RNA-7N- and RNA-2'O-methyltransferase activities. This is Outer capsid protein VP1 (S1) from Aquareovirus C (isolate Golden shiner/USA/GSRV/1977) (AQRV-C).